The chain runs to 525 residues: Putative ankyrin repeat protein FPV228 (525 aa).

ANK repeat units lie at residues 39–71 (HPDN…TRDI), 72–122 (LGNT…ACNN), 123–152 (LNQT…KVNI), 156–185 (YGNT…DVNI), 190–226 (YWYS…TRCR), 227–254 (LNTT…DINA), 258–287 (NDNA…DVNM), 291–320 (RGKT…NPNI), and 324–353 (IMNT…DINH).

The sequence is that of Putative ankyrin repeat protein FPV228 from Fowlpox virus (strain NVSL) (FPV).